The sequence spans 367 residues: Outer membrane protein assembly factor BamC (367 aa).

An N-terminal signal peptide occupies residues 1 to 16; it reads MRLLPLFLMVTLAASG. Residue Cys17 is the site of N-palmitoyl cysteine attachment. Residue Cys17 is the site of S-diacylglycerol cysteine attachment.

Belongs to the BamC family. As to quaternary structure, part of the Bam complex.

Its subcellular location is the cell outer membrane. In terms of biological role, part of the outer membrane protein assembly complex, which is involved in assembly and insertion of beta-barrel proteins into the outer membrane. This Thiobacillus denitrificans (strain ATCC 25259 / T1) protein is Outer membrane protein assembly factor BamC.